The following is an 85-amino-acid chain: Large ribosomal subunit protein bL27 (85 aa).

Positions 1 to 10 are enriched in gly residues; sequence MAQKKGGGST. The segment at 1–20 is disordered; sequence MAQKKGGGSTRNGRDSKPKM.

This sequence belongs to the bacterial ribosomal protein bL27 family.

The protein is Large ribosomal subunit protein bL27 of Acidovorax ebreus (strain TPSY) (Diaphorobacter sp. (strain TPSY)).